Consider the following 123-residue polypeptide: Ribosome-binding factor A (123 aa).

This sequence belongs to the RbfA family. In terms of assembly, monomer. Binds 30S ribosomal subunits, but not 50S ribosomal subunits or 70S ribosomes.

The protein resides in the cytoplasm. In terms of biological role, one of several proteins that assist in the late maturation steps of the functional core of the 30S ribosomal subunit. Associates with free 30S ribosomal subunits (but not with 30S subunits that are part of 70S ribosomes or polysomes). Required for efficient processing of 16S rRNA. May interact with the 5'-terminal helix region of 16S rRNA. This Lactobacillus johnsonii (strain CNCM I-12250 / La1 / NCC 533) protein is Ribosome-binding factor A.